The sequence spans 111 residues: Large ribosomal subunit protein uL23 (111 aa).

It belongs to the universal ribosomal protein uL23 family. Part of the 50S ribosomal subunit. Contacts protein L29, and trigger factor when it is bound to the ribosome.

In terms of biological role, one of the early assembly proteins it binds 23S rRNA. One of the proteins that surrounds the polypeptide exit tunnel on the outside of the ribosome. Forms the main docking site for trigger factor binding to the ribosome. This chain is Large ribosomal subunit protein uL23, found in Nitrosospira multiformis (strain ATCC 25196 / NCIMB 11849 / C 71).